We begin with the raw amino-acid sequence, 244 residues long: Probable transcriptional regulatory protein DNO_1179 (244 aa).

This sequence belongs to the TACO1 family.

The protein resides in the cytoplasm. In Dichelobacter nodosus (strain VCS1703A), this protein is Probable transcriptional regulatory protein DNO_1179.